We begin with the raw amino-acid sequence, 164 residues long: Thiol peroxidase (164 aa).

The region spanning Leu16–Ile162 is the Thioredoxin domain. Catalysis depends on Cys58, which acts as the Cysteine sulfenic acid (-SOH) intermediate. Residues Cys58 and Cys92 are joined by a disulfide bond.

It belongs to the peroxiredoxin family. Tpx subfamily. In terms of assembly, homodimer.

It carries out the reaction a hydroperoxide + [thioredoxin]-dithiol = an alcohol + [thioredoxin]-disulfide + H2O. Its function is as follows. Thiol-specific peroxidase that catalyzes the reduction of hydrogen peroxide and organic hydroperoxides to water and alcohols, respectively. Plays a role in cell protection against oxidative stress by detoxifying peroxides. In Streptococcus agalactiae serotype V (strain ATCC BAA-611 / 2603 V/R), this protein is Thiol peroxidase.